The primary structure comprises 1138 residues: uncharacterized protein (1138 aa).

2 disordered regions span residues Glu-985–Glu-1015 and Leu-1094–Leu-1138. Residues Asp-1110–Leu-1138 show a composition bias toward acidic residues.

This is an uncharacterized protein from Ostreid herpesvirus 1 (isolate France) (OsHV-1).